We begin with the raw amino-acid sequence, 290 residues long: Succinate dehydrogenase [ubiquinone] iron-sulfur subunit, mitochondrial (290 aa).

Residues 1 to 38 (MAAAVVGVSLRRGVPARFLRAGLRPVRGLEAVHGICRG) constitute a mitochondrion transit peptide. The 94-residue stretch at 50–143 (KKFSIYRWDP…TTKIYPLPHM (94 aa)) folds into the 2Fe-2S ferredoxin-type domain. [2Fe-2S] cluster-binding residues include cysteine 103, cysteine 108, cysteine 111, and cysteine 123. The 4Fe-4S ferredoxin-type domain occupies 186–216 (DRQKLDGLYECILCACCSTSCPSYWWNGDKY). [4Fe-4S] cluster-binding residues include cysteine 196, cysteine 199, and cysteine 202. Cysteine 206 lines the [3Fe-4S] cluster pocket. Tryptophan 211 contacts a ubiquinone. [3Fe-4S] cluster contacts are provided by cysteine 253 and cysteine 259. Position 263 (cysteine 263) interacts with [4Fe-4S] cluster.

The protein belongs to the succinate dehydrogenase/fumarate reductase iron-sulfur protein family. As to quaternary structure, component of complex II composed of four subunits: the flavoprotein (FP) SDHA, iron-sulfur protein (IP) SDHB, and a cytochrome b560 composed of SDHC and SDHD. The cofactor is [2Fe-2S] cluster. It depends on [3Fe-4S] cluster as a cofactor. [4Fe-4S] cluster serves as cofactor.

Its subcellular location is the mitochondrion inner membrane. The catalysed reaction is a quinone + succinate = fumarate + a quinol. It catalyses the reaction (R)-malate + a quinone = enol-oxaloacetate + a quinol. It carries out the reaction (S)-malate + a quinone = enol-oxaloacetate + a quinol. The protein operates within carbohydrate metabolism; tricarboxylic acid cycle; fumarate from succinate (eukaryal route): step 1/1. Enol-oxaloacetate inhibits the succinate dehydrogenase activity. In terms of biological role, iron-sulfur protein (IP) subunit of the succinate dehydrogenase complex (mitochondrial respiratory chain complex II), responsible for transferring electrons from succinate to ubiquinone (coenzyme Q). SDH also oxidizes malate to the non-canonical enol form of oxaloacetate, enol-oxaloacetate. Enol-oxaloacetate, which is a potent inhibitor of the succinate dehydrogenase activity, is further isomerized into keto-oxaloacetate. The sequence is that of Succinate dehydrogenase [ubiquinone] iron-sulfur subunit, mitochondrial (SDHB) from Gallus gallus (Chicken).